The chain runs to 114 residues: uncharacterized protein (114 aa).

A signal peptide spans 1–19 (MKASYLVLIFISIFSMAQA). Residue serine 41 is modified to Phosphoserine.

This sequence belongs to the protease inhibitor I9 family.

This is an uncharacterized protein from Saccharomyces cerevisiae (strain ATCC 204508 / S288c) (Baker's yeast).